The following is a 178-amino-acid chain: Beta-lactoglobulin-1A/1C (178 aa).

The signal sequence occupies residues methionine 1–alanine 18. Disulfide bonds link cysteine 84/cysteine 176 and cysteine 124/cysteine 137.

The protein belongs to the calycin superfamily. Lipocalin family. Under physiological conditions beta-lactoglobulin exists as an equilibrium mixture of monomeric and dimeric forms.

Its subcellular location is the secreted. Its function is as follows. Lactoglobulin is the primary component of whey, it binds retinol and is probably involved in the transport of that molecule. The protein is Beta-lactoglobulin-1A/1C of Sus scrofa (Pig).